The following is a 287-amino-acid chain: 2-dehydro-3-deoxyphosphooctonate aldolase (287 aa).

It belongs to the KdsA family.

Its subcellular location is the cytoplasm. The enzyme catalyses D-arabinose 5-phosphate + phosphoenolpyruvate + H2O = 3-deoxy-alpha-D-manno-2-octulosonate-8-phosphate + phosphate. It participates in carbohydrate biosynthesis; 3-deoxy-D-manno-octulosonate biosynthesis; 3-deoxy-D-manno-octulosonate from D-ribulose 5-phosphate: step 2/3. It functions in the pathway bacterial outer membrane biogenesis; lipopolysaccharide biosynthesis. This Nitrobacter winogradskyi (strain ATCC 25391 / DSM 10237 / CIP 104748 / NCIMB 11846 / Nb-255) protein is 2-dehydro-3-deoxyphosphooctonate aldolase.